The primary structure comprises 475 residues: C3a anaphylatoxin chemotactic receptor (475 aa).

Residues 1–23 lie on the Extracellular side of the membrane; it reads MESSSAETNSTGLHLEPQYQPET. The N-linked (GlcNAc...) asparagine glycan is linked to asparagine 9. A helical transmembrane segment spans residues 24 to 46; that stretch reads ILAMAILGLTFVLGLPGNGLVLW. Residues 47–57 lie on the Cytoplasmic side of the membrane; sequence VAGLKMRRTVN. A helical transmembrane segment spans residues 58–80; sequence TVWFLHLTVADFVCCLSLPFSMA. Residues 81-96 are Extracellular-facing; the sequence is HLALRGYWPYGEILCK. Cysteine 95 and cysteine 172 are disulfide-bonded. A helical transmembrane segment spans residues 97–118; it reads FIPTVIIFNMFASVFLLTAISL. The Cytoplasmic portion of the chain corresponds to 119 to 139; that stretch reads DRCLMVLKPIWCQNHRNVRTA. The helical transmembrane segment at 140–160 threads the bilayer; the sequence is CIICGCIWLVAFVLCIPVFVY. Topologically, residues 161-331 are extracellular; that stretch reads RETFTLENHT…RLLKVITFTR (171 aa). A glycan (N-linked (GlcNAc...) asparagine) is linked at asparagine 168. 2 positions are modified to sulfotyrosine: tyrosine 174 and tyrosine 183. 2 N-linked (GlcNAc...) asparagine glycosylation sites follow: asparagine 273 and asparagine 292. Residues 332 to 351 traverse the membrane as a helical segment; it reads LVVGFLLPMIIMVACYTLII. Residues 352–368 lie on the Cytoplasmic side of the membrane; sequence FRMRRVRVVKSWNKALH. The chain crosses the membrane as a helical span at residues 369 to 391; it reads LAMVVVTIFLICWAPYHVFGVLI. Residues 392 to 408 are Extracellular-facing; the sequence is LFINPESRVGAALLSWD. Residues 409–429 form a helical membrane-spanning segment; it reads HVSIALASANSCFNPFLYALL. The Cytoplasmic segment spans residues 430–475; sequence GRDLRKRVRQSMKGILEAAFSEDISKSTSFIQAKAFSEKHSLSTNV. The residue at position 450 (serine 450) is a Phosphoserine.

This sequence belongs to the G-protein coupled receptor 1 family. In terms of assembly, interacts with VGF-derived peptide TLQP-21. As to expression, expressed in the heart, kidney, lung, liver, peritoneal macrophages and spleen.

The protein resides in the cell membrane. Functionally, receptor for the chemotactic and inflammatory peptide anaphylatoxin C3a. This receptor stimulates chemotaxis, granule enzyme release and superoxide anion production. This chain is C3a anaphylatoxin chemotactic receptor (C3AR1), found in Cavia porcellus (Guinea pig).